We begin with the raw amino-acid sequence, 777 residues long: Semaphorin-3D (777 aa).

The signal sequence occupies residues 1 to 37 (MNVTKDENPRSRSQDLHLFHAWMMLIMTVLFLPVTET). The Sema domain occupies 44–531 (RLKLTYKDLL…SWDGLVQLSL (488 aa)). C117 and C128 are oxidised to a cystine. Residue N139 is glycosylated (N-linked (GlcNAc...) asparagine). Disulfide bonds link C146–C155, C286–C398, C310–C358, and C534–C552. The PSI domain occupies 533–585 (RCDTYGKACADCCLARDPYCAWDGNACSRYAPTSKRRARRQDVKYGDPITQCW). Residues 592–680 (SHETADEKVI…TFIHTIVKLT (89 aa)) form the Ig-like C2-type domain. N607 and N724 each carry an N-linked (GlcNAc...) asparagine glycan. An intrachain disulfide couples C665 to C731. A compositionally biased stretch (basic residues) spans 740–765 (RRQRNKGSPKWKHMQEMKKKRNRRHH). Residues 740–777 (RRQRNKGSPKWKHMQEMKKKRNRRHHRDLDELQRSVAT) form a disordered region. A compositionally biased stretch (basic and acidic residues) spans 766–777 (RDLDELQRSVAT).

This sequence belongs to the semaphorin family.

It is found in the secreted. Induces the collapse and paralysis of neuronal growth cones. Could potentially act as repulsive cues toward specific neuronal populations. Binds to neuropilin. This chain is Semaphorin-3D (Sema3d), found in Mus musculus (Mouse).